The following is a 938-amino-acid chain: Isoleucine--tRNA ligase (938 aa).

Positions P58 to H68 match the 'HIGH' region motif. E561 provides a ligand contact to L-isoleucyl-5'-AMP. Positions K602–S606 match the 'KMSKS' region motif. Residue K605 coordinates ATP. Residues C901, C904, C921, and C924 each contribute to the Zn(2+) site.

This sequence belongs to the class-I aminoacyl-tRNA synthetase family. IleS type 1 subfamily. As to quaternary structure, monomer. Zn(2+) is required as a cofactor.

The protein resides in the cytoplasm. The enzyme catalyses tRNA(Ile) + L-isoleucine + ATP = L-isoleucyl-tRNA(Ile) + AMP + diphosphate. Catalyzes the attachment of isoleucine to tRNA(Ile). As IleRS can inadvertently accommodate and process structurally similar amino acids such as valine, to avoid such errors it has two additional distinct tRNA(Ile)-dependent editing activities. One activity is designated as 'pretransfer' editing and involves the hydrolysis of activated Val-AMP. The other activity is designated 'posttransfer' editing and involves deacylation of mischarged Val-tRNA(Ile). The sequence is that of Isoleucine--tRNA ligase from Yersinia enterocolitica serotype O:8 / biotype 1B (strain NCTC 13174 / 8081).